A 406-amino-acid polypeptide reads, in one-letter code: Succinylornithine transaminase (406 aa).

Lys252 is modified (N6-(pyridoxal phosphate)lysine).

This sequence belongs to the class-III pyridoxal-phosphate-dependent aminotransferase family. AstC subfamily. The cofactor is pyridoxal 5'-phosphate.

It catalyses the reaction N(2)-succinyl-L-ornithine + 2-oxoglutarate = N-succinyl-L-glutamate 5-semialdehyde + L-glutamate. Its pathway is amino-acid degradation; L-arginine degradation via AST pathway; L-glutamate and succinate from L-arginine: step 3/5. Its function is as follows. Catalyzes the transamination of N(2)-succinylornithine and alpha-ketoglutarate into N(2)-succinylglutamate semialdehyde and glutamate. Can also act as an acetylornithine aminotransferase. The polypeptide is Succinylornithine transaminase (Escherichia coli O17:K52:H18 (strain UMN026 / ExPEC)).